The primary structure comprises 338 residues: DNA-directed RNA polymerase subunit alpha (338 aa).

The alpha N-terminal domain (alpha-NTD) stretch occupies residues 1–226; the sequence is MLIAQRPSLT…ELFGLARELN (226 aa). The segment at 243–338 is alpha C-terminal domain (alpha-CTD); sequence LAADLVMPIE…DAGFLETEHY (96 aa).

Belongs to the RNA polymerase alpha chain family. Homodimer. The RNAP catalytic core consists of 2 alpha, 1 beta, 1 beta' and 1 omega subunit. When a sigma factor is associated with the core the holoenzyme is formed, which can initiate transcription.

It carries out the reaction RNA(n) + a ribonucleoside 5'-triphosphate = RNA(n+1) + diphosphate. DNA-dependent RNA polymerase catalyzes the transcription of DNA into RNA using the four ribonucleoside triphosphates as substrates. The polypeptide is DNA-directed RNA polymerase subunit alpha (Streptomyces avermitilis (strain ATCC 31267 / DSM 46492 / JCM 5070 / NBRC 14893 / NCIMB 12804 / NRRL 8165 / MA-4680)).